We begin with the raw amino-acid sequence, 553 residues long: 3-amino-2-hydroxy-4-methoxybenzoate diazotase (553 aa).

Over residues 157–167 (ALPAAGATGPA) the composition is skewed to low complexity. The interval 157–178 (ALPAAGATGPAREGDAPPPAPV) is disordered.

The protein belongs to the ATP-dependent AMP-binding enzyme family.

It catalyses the reaction 3-amino-2-hydroxy-4-methoxybenzoate + nitrite + ATP = cremeomycin + AMP + diphosphate + H2O. It functions in the pathway antibiotic biosynthesis. In terms of biological role, part of a gene cluster involved in the biosynthesis of cremeomycin, a light-sensitive o-diazoquinone with antibacterial and antiproliferative effects. Catalyzes the last step of cremeomycin biosynthesis, the diazotization of 3-amino-2-hydroxy-4-methoxybenzoate (3,2,4-AHMBA) with nitrite to generate cremeomycin. The polypeptide is 3-amino-2-hydroxy-4-methoxybenzoate diazotase (Streptomyces cremeus).